The primary structure comprises 194 residues: Adenylate kinase (194 aa).

Glycine 10–threonine 15 is an ATP binding site. Positions serine 30–valine 59 are NMP. AMP contacts are provided by residues threonine 31, arginine 36, glutamine 57–valine 59, glycine 85–arginine 88, and glutamine 92. The interval serine 126 to aspartate 142 is LID. Residue arginine 127 coordinates ATP. Positions 139 and 150 each coordinate AMP. Alanine 178 is a binding site for ATP.

This sequence belongs to the adenylate kinase family. In terms of assembly, monomer.

It is found in the cytoplasm. The enzyme catalyses AMP + ATP = 2 ADP. It functions in the pathway purine metabolism; AMP biosynthesis via salvage pathway; AMP from ADP: step 1/1. Its function is as follows. Catalyzes the reversible transfer of the terminal phosphate group between ATP and AMP. Plays an important role in cellular energy homeostasis and in adenine nucleotide metabolism. The polypeptide is Adenylate kinase (Brucella melitensis biotype 1 (strain ATCC 23456 / CCUG 17765 / NCTC 10094 / 16M)).